The following is a 396-amino-acid chain: Elongation factor Tu (396 aa).

The tr-type G domain maps to 10–206 (KPHINVGTIG…QMDAYIPEPQ (197 aa)). The tract at residues 19-26 (GHVDHGKT) is G1. Residue 19–26 (GHVDHGKT) coordinates GTP. Threonine 26 contacts Mg(2+). The G2 stretch occupies residues 60–64 (GITIA). The G3 stretch occupies residues 81-84 (DCPG). GTP-binding positions include 81-85 (DCPGH) and 136-139 (NKAD). The tract at residues 136–139 (NKAD) is G4. Positions 174 to 176 (SAL) are G5.

It belongs to the TRAFAC class translation factor GTPase superfamily. Classic translation factor GTPase family. EF-Tu/EF-1A subfamily. As to quaternary structure, monomer.

It is found in the cytoplasm. The catalysed reaction is GTP + H2O = GDP + phosphate + H(+). Functionally, GTP hydrolase that promotes the GTP-dependent binding of aminoacyl-tRNA to the A-site of ribosomes during protein biosynthesis. This Nitrosococcus oceani (strain ATCC 19707 / BCRC 17464 / JCM 30415 / NCIMB 11848 / C-107) protein is Elongation factor Tu.